The primary structure comprises 227 residues: UPF0173 metal-dependent hydrolase Oter_4201 (227 aa).

The protein belongs to the UPF0173 family.

This chain is UPF0173 metal-dependent hydrolase Oter_4201, found in Opitutus terrae (strain DSM 11246 / JCM 15787 / PB90-1).